The sequence spans 392 residues: Protein FAM53C (392 aa).

Residue Met1 is modified to N-acetylmethionine. Residues 77–120 (HLRPPSRGSSPKEQPLSQVLRPEPPDPEKLPVPPAPPSKRHCRS) form a disordered region. Polar residues predominate over residues 83 to 93 (RGSSPKEQPLS). Phosphoserine is present on residues Ser122 and Ser162. Disordered regions lie at residues 141–167 (LWTP…PKRV), 203–303 (SRPC…LDFD), and 340–364 (SASC…EGAV). Residues 203–215 (SRPCATSPQSGSW) show a composition bias toward polar residues. Phosphoserine occurs at positions 232, 234, 255, 273, and 299. Low complexity predominate over residues 241 to 256 (ASRFLPSARSSPASSP). A compositionally biased stretch (basic and acidic residues) spans 278 to 303 (LDARKTGVKRRHEEDPRRLRPSLDFD).

Belongs to the FAM53 family.

In Pongo abelii (Sumatran orangutan), this protein is Protein FAM53C.